The primary structure comprises 717 residues: Epithelial splicing regulatory protein 2 (717 aa).

Pro residues predominate over residues 1 to 14 (MTPPPPPPPPPGPD). Residues 1 to 23 (MTPPPPPPPPPGPDPAVDSATDP) are disordered. S83 carries the phosphoserine modification. RRM domains follow at residues 247 to 343 (TVVR…RFLS), 348 to 428 (VILR…RSTA), and 465 to 545 (DCVR…PCST). S563 carries the phosphoserine modification.

It belongs to the ESRP family. In terms of assembly, interacts with RBPMS. As to expression, epithelial cell-specific.

The protein localises to the nucleus. In terms of biological role, mRNA splicing factor that regulates the formation of epithelial cell-specific isoforms. Specifically regulates the expression of FGFR2-IIIb, an epithelial cell-specific isoform of FGFR2. Also regulates the splicing of CD44, CTNND1, ENAH, 3 transcripts that undergo changes in splicing during the epithelial-to-mesenchymal transition (EMT). Acts by directly binding specific sequences in mRNAs. Binds the GU-rich sequence motifs in the ISE/ISS-3, a cis-element regulatory region present in the mRNA of FGFR2. This is Epithelial splicing regulatory protein 2 (Esrp2) from Mus musculus (Mouse).